The sequence spans 656 residues: Acetyl-coenzyme A synthetase (656 aa).

CoA is bound by residues 198–201 and threonine 316; that span reads RGGR. Residues 392–394, 416–421, aspartate 507, and arginine 522 contribute to the ATP site; these read GEP and DTFWQT. Position 530 (serine 530) interacts with CoA. An ATP-binding site is contributed by arginine 533. Valine 544, histidine 546, and valine 549 together coordinate Mg(2+). Arginine 591 is a binding site for CoA. Lysine 616 is subject to N6-acetyllysine.

It belongs to the ATP-dependent AMP-binding enzyme family. Requires Mg(2+) as cofactor. Post-translationally, acetylated. Deacetylation by the SIR2-homolog deacetylase activates the enzyme.

It catalyses the reaction acetate + ATP + CoA = acetyl-CoA + AMP + diphosphate. In terms of biological role, catalyzes the conversion of acetate into acetyl-CoA (AcCoA), an essential intermediate at the junction of anabolic and catabolic pathways. AcsA undergoes a two-step reaction. In the first half reaction, AcsA combines acetate with ATP to form acetyl-adenylate (AcAMP) intermediate. In the second half reaction, it can then transfer the acetyl group from AcAMP to the sulfhydryl group of CoA, forming the product AcCoA. The sequence is that of Acetyl-coenzyme A synthetase from Rhodobacter capsulatus (strain ATCC BAA-309 / NBRC 16581 / SB1003).